Consider the following 316-residue polypeptide: MSDISKASLPKAIFLMGPTASGKTALAIELRKILPVELISVDSALIYKGMDIGTAKPNAEELLAAPHRLLNIRDPSQAYSAADFRRDALAEMADITAAGRIPLLVGGTMLYFKALLEGLSPLPSADPEVRARIEQQAAEQGWESLHRQLQEIDPVAAARIHPNDPQRLSRALEVFFISGKTLPELTQTSGDALPYQVHQFAIAPASRELLHQRIEQRFHQMLASGFEAEVRALFARGDLHTDLPSIRCVGYRQMWSYLEGEISYDEMVYRGVCATRQLAKRQITWLRGWEGVHWLDSEKPEQARDEVLQVVGAIAG.

Position 17–24 (G17–T24) interacts with ATP. T19 to T24 is a binding site for substrate. 4 interaction with substrate tRNA regions span residues D42 to L45, Q166 to R170, R247 to R252, and K280 to R287.

Belongs to the IPP transferase family. As to quaternary structure, monomer. The cofactor is Mg(2+).

It catalyses the reaction adenosine(37) in tRNA + dimethylallyl diphosphate = N(6)-dimethylallyladenosine(37) in tRNA + diphosphate. Functionally, catalyzes the transfer of a dimethylallyl group onto the adenine at position 37 in tRNAs that read codons beginning with uridine, leading to the formation of N6-(dimethylallyl)adenosine (i(6)A). This is tRNA dimethylallyltransferase from Escherichia coli O6:K15:H31 (strain 536 / UPEC).